The chain runs to 229 residues: Choline-phosphate cytidylyltransferase (229 aa).

L6, A8, G9, Y80, N82, S85, and A101 together coordinate CDP-choline. D102 contributes to the Mg(2+) binding site. Y185 is a CDP-choline binding site. The Mg(2+) site is built by E211 and D213.

This sequence belongs to the LicC/PntC cytidylyltransferase family. In terms of assembly, monomer. Forms dimers in LicC-CDP-Cho-Mg(2+) crystals, but the monomer is probably the biologically functional unit. Requires Mg(2+) as cofactor.

The enzyme catalyses phosphocholine + CTP + H(+) = CDP-choline + diphosphate. The protein operates within cell wall biogenesis; teichoic acid biosynthesis. Its pathway is cell wall biogenesis; lipoteichoic acid biosynthesis. Its activity is regulated as follows. Mg(2+) in slight excess of CTP gives maximal activity. Strongly inhibited by Ca(2+) and several other metal ions, such as Cd(2+), Co(2+), Cu(2+), Mn(2+), Ni(2+), Zn(2+) and Fe(2+). Also inhibited by Mg(2+) at high concentrations. CDP-Cho is a competitive inhibitor with respect to CTP, whereas diphosphate is a mixed-type inhibitor with respect to CTP. Its function is as follows. Cytidylyltransferase involved in the biosynthesis of the phosphocholine containing cell wall constituents, teichoic acid and lipoteichoic acid, which are essential for cell separation and pathogenesis. Catalyzes the activation of phosphocholine (P-Cho) to CDP-choline (CDP-Cho). Can also use phosphoethanolamine and 2-aminoethylphosphonate, with much lower efficiency. Shows lower activity with dCTP, weak activity with ATP and no activity with GTP, TTP, UTP, dATP, dGTP and dTTP. The sequence is that of Choline-phosphate cytidylyltransferase from Streptococcus pneumoniae (strain ATCC BAA-255 / R6).